The chain runs to 206 residues: CMP-5'-(N-acetyl-N-hydroxy-3-aminopropyl)phosphonate hydrolase (206 aa).

The 130-residue stretch at 37–166 (VRAPGAAIIV…RTVTSGTAIG (130 aa)) folds into the Nudix hydrolase domain. The Nudix box motif lies at 74-95 (GLVDDREDPAVTAAREAEEETG). Residues 177-194 (RQQPGGVQEQPGGAQQQG) show a composition bias toward low complexity. Residues 177–206 (RQQPGGVQEQPGGAQQQGMNESHSGRTVRG) form a disordered region.

It belongs to the Nudix hydrolase family. Mg(2+) serves as cofactor.

It carries out the reaction CMP-5'-(N-acetyl-N-hydroxy-3-aminopropyl)phosphonate + H2O = 3-(N-acetyl-N-hydroxy)aminopropylphosphonate + CMP + H(+). The protein operates within antibiotic biosynthesis. Its function is as follows. Nucleotide hydrolase involved in the biosynthesis of the phosphonate antibiotic FR-900098, a potent antimalarial agent that acts as an inhibitor of 1-deoxy-D-xylulose 5-phosphate reductoisomerase (DXR), the first enzyme in the nonmevalonate pathway for isoprenoid biosynthesis. Catalyzes the hydrolysis of CMP-5'-(N-acetyl-N-hydroxy-3-aminopropyl)phosphonate (CMP-5'-FR-900098) to produce CMP and the final compound FR-900098. In vitro, has broad substrate specificity and also catalyzes the hydrolysis of all the other CMP-containing intermediates within the pathway and shows low activity toward CTP. This is CMP-5'-(N-acetyl-N-hydroxy-3-aminopropyl)phosphonate hydrolase from Streptomyces rubellomurinus (strain ATCC 31215).